The primary structure comprises 593 residues: Potassium channel KAT6 (593 aa).

The Cytoplasmic segment spans residues 1–33; the sequence is MAASRSELLRPAFGEPSPSLGPFVVNPHTCSYR. The helical transmembrane segment at 34–54 threads the bilayer; the sequence is WWQKFLIVLVLYTAWASPFEL. The Extracellular portion of the chain corresponds to 55–64; it reads AMEKSASAAL. A helical membrane pass occupies residues 65–85; it reads AVTELVVDAFFAVDIAVSFFV. Residues 86-106 lie on the Cytoplasmic side of the membrane; the sequence is AYRDASTGLLVTDRKKIATRH. A helical transmembrane segment spans residues 107-129; the sequence is LARPCLALDVASTIPLQMIYRIV. Residues 130–138 are Extracellular-facing; it reads SGKRQALYG. A helical; Voltage-sensor membrane pass occupies residues 139-159; it reads LLNLLRLWRLRRVSKLFARLE. Residues 160 to 173 lie on the Cytoplasmic side of the membrane; that stretch reads KDIRFSYLWTRLIK. A helical membrane pass occupies residues 174 to 194; that stretch reads LLYVTLFAVHFASCIYLWMAF. The Extracellular segment spans residues 195–221; sequence HHKAKELTWIGSQFHGFEDRSVWFCYT. Positions 222 to 241 form an intramembrane region, pore-forming; the sequence is CAVYWSITTLATVGYGDLHA. Topologically, residues 242-247 are extracellular; that stretch reads ANTGEM. Residues 248–268 form a helical membrane-spanning segment; that stretch reads LFSIAFMLFNMGLTSYIIGNI. The Cytoplasmic segment spans residues 269-593; the sequence is TNLVVHETTN…RDGDHLFFSW (325 aa). 350–470 lines the a nucleoside 3',5'-cyclic phosphate pocket; sequence LFQGVSDKLV…VVVFSNFVLY (121 aa). Residues 522–593 enclose the KHA domain; that stretch reads RVSIHEHLLN…RDGDHLFFSW (72 aa).

It belongs to the potassium channel family. Plant (TC 1.A.1.4) subfamily.

Its subcellular location is the membrane. Functionally, probable inward-rectifying potassium channel. Assuming opened or closed conformations in response to the voltage difference across the membrane, the channel is activated by hyperpolarization. This is Potassium channel KAT6 from Oryza sativa subsp. japonica (Rice).